The following is a 333-amino-acid chain: Multiheme cytochrome MtrA (333 aa).

The N-terminal stretch at 1-34 (MKNSLKMKNLLPALVITMAMSAVMSLCIAPNAYA) is a signal peptide.

The protein is Multiheme cytochrome MtrA (mtrA) of Shewanella baltica (strain OS185).